Here is a 93-residue protein sequence, read N- to C-terminus: Small ribosomal subunit protein uS19 (93 aa).

The protein belongs to the universal ribosomal protein uS19 family.

In terms of biological role, protein S19 forms a complex with S13 that binds strongly to the 16S ribosomal RNA. The protein is Small ribosomal subunit protein uS19 of Synechococcus sp. (strain JA-2-3B'a(2-13)) (Cyanobacteria bacterium Yellowstone B-Prime).